Reading from the N-terminus, the 545-residue chain is Mitogen-activated protein kinase kinase kinase mom-4 (545 aa).

Residues 1–21 (MDTSPHSKPSSSSASQSSHSP) show a composition bias toward low complexity. The tract at residues 1 to 35 (MDTSPHSKPSSSSASQSSHSPSPAPVTAPRKTRDS) is disordered. Residues 53–308 (NLNSHQLGRG…AECLQYFTAL (256 aa)) enclose the Protein kinase domain. ATP-binding positions include 59–67 (LGRGTYGIV) and Lys86. The active-site Proton acceptor is the Asp178. The segment at 316–444 (NVPLADANTN…PIDDRRDSNE (129 aa)) is disordered. Polar residues-rich tracts occupy residues 352–369 (NGRTPTASNHLNAPQAVN) and 396–411 (ASSSGAFRGPRSQSEA).

Belongs to the protein kinase superfamily. STE Ser/Thr protein kinase family. MAP kinase kinase kinase subfamily. As to quaternary structure, interacts with, and is activated by, tap-1. The cofactor is Mg(2+).

The enzyme catalyses L-seryl-[protein] + ATP = O-phospho-L-seryl-[protein] + ADP + H(+). The catalysed reaction is L-threonyl-[protein] + ATP = O-phospho-L-threonyl-[protein] + ADP + H(+). Functionally, part of the Wnt signaling pathway essential for the specification of the mesodermal cell fate in early embryos. Stimulates the wrm-1/lit-1-dependent phosphorylation of pop-1 and plays a role in the initial nuclear accumulation of wrm-1. This Caenorhabditis briggsae protein is Mitogen-activated protein kinase kinase kinase mom-4.